Reading from the N-terminus, the 340-residue chain is L-threonine 3-dehydrogenase (340 aa).

Cys38 contributes to the Zn(2+) binding site. Catalysis depends on charge relay system residues Thr40 and His43. His63, Glu64, Cys93, Cys96, Cys99, and Cys107 together coordinate Zn(2+). Residues Ile175, Asp195, Arg200, 261–263, and 285–286 each bind NAD(+); these read LGI and IY.

This sequence belongs to the zinc-containing alcohol dehydrogenase family. Homotetramer. Zn(2+) serves as cofactor.

Its subcellular location is the cytoplasm. It carries out the reaction L-threonine + NAD(+) = (2S)-2-amino-3-oxobutanoate + NADH + H(+). The protein operates within amino-acid degradation; L-threonine degradation via oxydo-reductase pathway; glycine from L-threonine: step 1/2. Its function is as follows. Catalyzes the NAD(+)-dependent oxidation of L-threonine to 2-amino-3-ketobutyrate. This chain is L-threonine 3-dehydrogenase, found in Xanthomonas axonopodis pv. citri (strain 306).